The sequence spans 299 residues: Glutamate formimidoyltransferase (299 aa).

Catalysis depends on His-82, which acts as the For formimidoyltransferase activity. Position 163–172 (163–172 (GDRKIHPTAG)) interacts with folate.

The protein belongs to the formiminotransferase family.

The protein resides in the cytoplasm. The catalysed reaction is (6S)-5-formyl-5,6,7,8-tetrahydrofolate + L-glutamate = N-formyl-L-glutamate + (6S)-5,6,7,8-tetrahydrofolate + H(+). The enzyme catalyses 5-formimidoyltetrahydrofolate + L-glutamate = N-formimidoyl-L-glutamate + (6S)-5,6,7,8-tetrahydrofolate. It catalyses the reaction (6S)-5-formyl-5,6,7,8-tetrahydrofolate + ATP = (6R)-5,10-methenyltetrahydrofolate + ADP + phosphate. Its pathway is amino-acid degradation; L-histidine degradation into L-glutamate; L-glutamate from N-formimidoyl-L-glutamate (transferase route): step 1/1. It participates in one-carbon metabolism; tetrahydrofolate interconversion. Catalyzes the transfer of the formyl group from N-formylglutamate to tetrahydrofolate (THF) to yield 5-formyltetrahydrofolate (5-CHO-THF) and glutamate (Glu). The triglutamate form of 5-CHO-THF (5-CHO-THF-Glu3) can also be used as substrate. It can also catalyze the transfer of the formimino group from N-formiminoglutamate to tetrahydrofolate (THF) to yield 5-formiminotetrahydrofolate (5-NH=CH-THF) and glutamate (Glu). It can replace YgfA to catalyze the irreversible ATP-dependent transformation of 5-CHO-THF to form 5,10-methenyltetrahydrofolate (5,10-CH=THF). This chain is Glutamate formimidoyltransferase, found in Streptococcus pyogenes serotype M1.